The primary structure comprises 310 residues: Homoserine kinase (310 aa).

91–101 provides a ligand contact to ATP; it reads PIGSGLGSSAC.

The protein belongs to the GHMP kinase family. Homoserine kinase subfamily.

It is found in the cytoplasm. It carries out the reaction L-homoserine + ATP = O-phospho-L-homoserine + ADP + H(+). It functions in the pathway amino-acid biosynthesis; L-threonine biosynthesis; L-threonine from L-aspartate: step 4/5. Functionally, catalyzes the ATP-dependent phosphorylation of L-homoserine to L-homoserine phosphate. The chain is Homoserine kinase from Escherichia coli O17:K52:H18 (strain UMN026 / ExPEC).